Consider the following 471-residue polypeptide: Uronate isomerase (471 aa).

The protein belongs to the metallo-dependent hydrolases superfamily. Uronate isomerase family.

It carries out the reaction D-glucuronate = D-fructuronate. The enzyme catalyses aldehydo-D-galacturonate = keto-D-tagaturonate. It participates in carbohydrate metabolism; pentose and glucuronate interconversion. This chain is Uronate isomerase, found in Latilactobacillus sakei subsp. sakei (strain 23K) (Lactobacillus sakei subsp. sakei).